Consider the following 193-residue polypeptide: 3-isopropylmalate dehydratase small subunit (193 aa).

It belongs to the LeuD family. LeuD type 1 subfamily. As to quaternary structure, heterodimer of LeuC and LeuD.

It catalyses the reaction (2R,3S)-3-isopropylmalate = (2S)-2-isopropylmalate. It participates in amino-acid biosynthesis; L-leucine biosynthesis; L-leucine from 3-methyl-2-oxobutanoate: step 2/4. Its function is as follows. Catalyzes the isomerization between 2-isopropylmalate and 3-isopropylmalate, via the formation of 2-isopropylmaleate. The chain is 3-isopropylmalate dehydratase small subunit from Bacillus cereus (strain AH820).